An 86-amino-acid chain; its full sequence is Large ribosomal subunit protein bL31B (86 aa).

This sequence belongs to the bacterial ribosomal protein bL31 family. Type B subfamily. Part of the 50S ribosomal subunit.

This Vibrio vulnificus (strain YJ016) protein is Large ribosomal subunit protein bL31B.